Consider the following 1009-residue polypeptide: Delphilin (1009 aa).

Disordered regions lie at residues 28-82 (CRSK…SNTM), 170-193 (EGPV…RSRS), 322-369 (ASPD…SRDT), 414-635 (ELSS…SDNN), and 990-1009 (SETQ…PLAW). Basic and acidic residues predominate over residues 44-53 (RSQDHHERPQ). In terms of domain architecture, PDZ spans 95 to 172 (TIRVYRGKKS…MPSLVVEEGP (78 aa)). Over residues 322–332 (ASPDSVDSNPY) the composition is skewed to polar residues. Low complexity-rich tracts occupy residues 334–352 (SLDS…SPLP) and 427–439 (DDST…SGSD). Pro residues-rich tracts occupy residues 441–455 (IPPP…PPPL), 462–477 (SPLP…PPPA), and 484–493 (IAPPPPPPRP). The span at 521-535 (SSPQPSSQPILQLHQ) shows a compositional bias: low complexity. The segment covering 557-602 (AQHTRLQHPSQSIYQSQQTTVPRTSPSLTKQKSLHSQPSQQSFEGT) has biased composition (polar residues). Over residues 607–628 (VPPPPPPPLPPPCDPPPLPKPS) the composition is skewed to pro residues. The FH2 domain occupies 629 to 1009 (PKASDNNHMS…SPRIASPLAW (381 aa)).

It localises to the postsynaptic cell membrane. Its function is as follows. Postsynaptic scaffolding protein. The chain is Delphilin (grid2ip) from Danio rerio (Zebrafish).